The chain runs to 464 residues: tRNA-2-methylthio-N(6)-dimethylallyladenosine synthase (464 aa).

Residues 1-24 are disordered; the sequence is MSDLVPLSRKPAPAAGGPAPSPAA. The span at 8–18 shows a compositional bias: low complexity; sequence SRKPAPAAGGP. One can recognise an MTTase N-terminal domain in the interval 27-142; it reads RKVYVHTFGC…LPEMVERARD (116 aa). [4Fe-4S] cluster-binding residues include C36, C72, C105, C180, C184, and C187. The 233-residue stretch at 166–398 folds into the Radical SAM core domain; sequence ARGRVTAFVT…LAAQRRIAGE (233 aa). One can recognise a TRAM domain in the interval 401–464; sequence AGELGKVVEV…GGSSLSGTLA (64 aa).

This sequence belongs to the methylthiotransferase family. MiaB subfamily. As to quaternary structure, monomer. Requires [4Fe-4S] cluster as cofactor.

Its subcellular location is the cytoplasm. The catalysed reaction is N(6)-dimethylallyladenosine(37) in tRNA + (sulfur carrier)-SH + AH2 + 2 S-adenosyl-L-methionine = 2-methylsulfanyl-N(6)-dimethylallyladenosine(37) in tRNA + (sulfur carrier)-H + 5'-deoxyadenosine + L-methionine + A + S-adenosyl-L-homocysteine + 2 H(+). Its function is as follows. Catalyzes the methylthiolation of N6-(dimethylallyl)adenosine (i(6)A), leading to the formation of 2-methylthio-N6-(dimethylallyl)adenosine (ms(2)i(6)A) at position 37 in tRNAs that read codons beginning with uridine. This Anaeromyxobacter sp. (strain K) protein is tRNA-2-methylthio-N(6)-dimethylallyladenosine synthase.